The chain runs to 426 residues: Serine--tRNA ligase (426 aa).

An L-serine-binding site is contributed by 227 to 229; that stretch reads TSE. ATP is bound by residues 258-260 and V274; that span reads RKE. E281 provides a ligand contact to L-serine. Residue 345 to 348 participates in ATP binding; it reads ELTS. T380 provides a ligand contact to L-serine.

The protein belongs to the class-II aminoacyl-tRNA synthetase family. Type-1 seryl-tRNA synthetase subfamily. As to quaternary structure, homodimer. The tRNA molecule binds across the dimer.

Its subcellular location is the cytoplasm. It catalyses the reaction tRNA(Ser) + L-serine + ATP = L-seryl-tRNA(Ser) + AMP + diphosphate + H(+). It carries out the reaction tRNA(Sec) + L-serine + ATP = L-seryl-tRNA(Sec) + AMP + diphosphate + H(+). It functions in the pathway aminoacyl-tRNA biosynthesis; selenocysteinyl-tRNA(Sec) biosynthesis; L-seryl-tRNA(Sec) from L-serine and tRNA(Sec): step 1/1. Catalyzes the attachment of serine to tRNA(Ser). Is also able to aminoacylate tRNA(Sec) with serine, to form the misacylated tRNA L-seryl-tRNA(Sec), which will be further converted into selenocysteinyl-tRNA(Sec). The chain is Serine--tRNA ligase from Clavibacter sepedonicus (Clavibacter michiganensis subsp. sepedonicus).